Reading from the N-terminus, the 130-residue chain is Protein ApaG (130 aa).

The ApaG domain occupies 3–127 (SEVTRSIRVT…FSLDSPHGRS (125 aa)).

In Rhodospirillum centenum (strain ATCC 51521 / SW), this protein is Protein ApaG.